We begin with the raw amino-acid sequence, 1482 residues long: Cystic fibrosis transmembrane conductance regulator (1482 aa).

Residues 1-77 (MQRSPLEKAS…KLINALRRCF (77 aa)) lie on the Cytoplasmic side of the membrane. The chain crosses the membrane as a helical span at residues 78-98 (FWRFMFYGIILYLGEVTKAVQ). Positions 81 to 365 (FMFYGIILYL…WAVQTWYDSL (285 aa)) constitute an ABC transmembrane type-1 1 domain. Residues 99 to 122 (PLLLGRIIASYDPDNKAERSIAIY) lie on the Extracellular side of the membrane. The chain crosses the membrane as a helical span at residues 123–146 (LGVGLCLLFIVRTLLLHPAIFGPH). At 147-195 (HIGMQMRIAMFSLIYKKTLKLSSRVLDKISIGQLVSLLSNNLNKFDEGL) the chain is on the cytoplasmic side. The helical transmembrane segment at 196 to 216 (ALAHFVWIAPLQVTLLMGLLW) threads the bilayer. Residues 217–222 (ELLQAS) lie on the Extracellular side of the membrane. The helical transmembrane segment at 223–243 (AFCGLAFLVVLALFQAGLGKM) threads the bilayer. Over 244-298 (MMKYRDQRAGKINERLVITSEMIENIQSVKAYCWEEAMEKMIENLRQTELKLTRK) the chain is Cytoplasmic. The helical transmembrane segment at 299 to 319 (AAYVRYFNSSAFFFSGLFVVF) threads the bilayer. The Extracellular portion of the chain corresponds to 320-339 (LSVLPYALLKGIMLRKIFTT). Residues 340-358 (ISFCIVLRMAVTRQFPWAV) form a helical membrane-spanning segment. Topologically, residues 359 to 859 (QTWYDSLGAI…YLRYVTVHKS (501 aa)) are cytoplasmic. ATP-binding positions include tryptophan 401, serine 434, 458 to 465 (GSTGAGKT), and glutamine 493. The ABC transporter 1 domain maps to 423 to 646 (NGDNSLFFSN…RPDFSSKLMG (224 aa)). Cysteine 524 is lipidated: S-palmitoyl cysteine. Serine 549 and serine 660 each carry phosphoserine. Positions 654–832 (TAERRNSIIT…EEINEEDLRE (179 aa)) are disordered R region. A Phosphoserine; by PKA modification is found at serine 670. Serine 686 is modified (phosphoserine). Lysine 688 is covalently cross-linked (Glycyl lysine isopeptide (Lys-Gly) (interchain with G-Cter in ubiquitin)). A phosphoserine mark is found at serine 700 and serine 712. The residue at position 717 (threonine 717) is a Phosphothreonine. Phosphoserine is present on residues serine 737, serine 768, serine 791, serine 796, and serine 814. A helical transmembrane segment spans residues 860-880 (LIFVLIWCLVVFLAEVAACLV). Residues 860-1156 (LIFVLIWCLV…AVNSSIDVDS (297 aa)) enclose the ABC transmembrane type-1 2 domain. The Extracellular segment spans residues 881–919 (VLCLLKKTSPQDKGNSTKGANNSYAVIITSTSAYYVFYI). N-linked (GlcNAc...) asparagine glycosylation is found at asparagine 895 and asparagine 901. The chain crosses the membrane as a discontinuously helical span at residues 920–940 (YVGVADGLLALGLFRGLPLVH). Residues 941–991 (TLITVSKILHRKMLHSVLQAPMSTLNTLKAGGILNRFSKDIAVLDDLLPLT) are Cytoplasmic-facing. A helical transmembrane segment spans residues 992 to 1012 (IFDFIQLLLIVIGAVAVVSVL). At 1013-1014 (KP) the chain is on the extracellular side. A helical membrane pass occupies residues 1015 to 1035 (YIFLATVPVIVAFILLRAYFL). Residues 1036–1096 (HTSQQLKQLE…TANWFLYLST (61 aa)) lie on the Cytoplasmic side of the membrane. Residues 1097 to 1117 (LRWFQMRIEMIFVIFFIAVTF) traverse the membrane as a helical segment. Topologically, residues 1118 to 1131 (ISILTTGEGEGTVG) are extracellular. A helical transmembrane segment spans residues 1132–1152 (IILTLAMNIMSTLQWAVNSSI). The Cytoplasmic segment spans residues 1153-1482 (DVDSLMRSVS…TEEEVQETRL (330 aa)). The region spanning 1212-1445 (MTVKDLTAKY…KSLFRQAISP (234 aa)) is the ABC transporter 2 domain. ATP-binding positions include tyrosine 1221 and 1246-1253 (GRTGSGKS). The tract at residues 1388 to 1482 (RTLKQAFADC…TEEEVQETRL (95 aa)) is interaction with GORASP2. Residue cysteine 1397 is the site of S-palmitoyl cysteine attachment. Basic residues predominate over residues 1454–1464 (HRNSSKQRSRS). Positions 1454–1482 (HRNSSKQRSRSKIAALKEETEEEVQETRL) are disordered. Position 1458 is a phosphoserine (serine 1458). A compositionally biased stretch (acidic residues) spans 1472–1482 (ETEEEVQETRL). Residues 1480 to 1482 (TRL) carry the PDZ-binding motif.

This sequence belongs to the ABC transporter superfamily. ABCC family. CFTR transporter (TC 3.A.1.202) subfamily. Monomer; does not require oligomerization for channel activity. May form oligomers in the membrane. Interacts with SLC26A3, SLC26A6 and NHERF1. Interacts with SHANK2. Interacts with MYO6. Interacts (via C-terminus) with GOPC (via PDZ domain); this promotes CFTR internalization and thereby decreases channel activity. Interacts with SLC4A7 through NHERF1. Found in a complex with MYO5B and RAB11A. Interacts with ANO1. Interacts with SLC26A8. Interacts with AHCYL1; the interaction increases CFTR activity. Interacts with CSE1L. The core-glycosylated form interacts with GORASP2 (via PDZ GRASP-type 1 domain) in respone to ER stress. Interacts with MARCHF2; the interaction leads to CFTR ubiqtuitination and degradation. Interacts with ADGRG2. N-glycosylated. Post-translationally, phosphorylated; cAMP treatment promotes phosphorylation and activates the channel. Dephosphorylation decreases the ATPase activity (in vitro). Phosphorylation at PKA sites activates the channel. Phosphorylation at PKC sites enhances the response to phosphorylation by PKA. Phosphorylated by AMPK; this inhibits channel activity. In terms of processing, ubiquitinated, leading to its degradation in the lysosome. Deubiquitination by USP10 in early endosomes enhances its endocytic recycling to the cell membrane. Ubiquitinated by RNF185 during ER stress. Ubiquitinated by MARCHF2.

Its subcellular location is the apical cell membrane. It is found in the early endosome membrane. It localises to the cell membrane. The protein resides in the recycling endosome membrane. The protein localises to the endoplasmic reticulum membrane. Its subcellular location is the nucleus. It carries out the reaction ATP + H2O + closed Cl(-) channel = ADP + phosphate + open Cl(-) channel.. The catalysed reaction is chloride(in) = chloride(out). It catalyses the reaction hydrogencarbonate(in) = hydrogencarbonate(out). The enzyme catalyses ATP + H2O = ADP + phosphate + H(+). Functionally, epithelial ion channel that plays an important role in the regulation of epithelial ion and water transport and fluid homeostasis. Mediates the transport of chloride ions across the cell membrane. Possesses an intrinsic ATPase activity and utilizes ATP to gate its channel; the passive flow of anions through the channel is gated by cycles of ATP binding and hydrolysis by the ATP-binding domains. The ion channel is also permeable to HCO(3)(-); selectivity depends on the extracellular chloride concentration. Exerts its function also by modulating the activity of other ion channels and transporters. Contributes to the regulation of the pH and the ion content of the epithelial fluid layer. Modulates the activity of the epithelial sodium channel (ENaC) complex, in part by regulating the cell surface expression of the ENaC complex. May regulate bicarbonate secretion and salvage in epithelial cells by regulating the transporter SLC4A7. Can inhibit the chloride channel activity of ANO1. Plays a role in the chloride and bicarbonate homeostasis during sperm epididymal maturation and capacitation. This chain is Cystic fibrosis transmembrane conductance regulator, found in Sus scrofa (Pig).